Here is an 845-residue protein sequence, read N- to C-terminus: Alanine--tRNA ligase (845 aa).

His552, His556, Cys653, and His657 together coordinate Zn(2+).

Belongs to the class-II aminoacyl-tRNA synthetase family. Zn(2+) serves as cofactor.

It localises to the cytoplasm. The enzyme catalyses tRNA(Ala) + L-alanine + ATP = L-alanyl-tRNA(Ala) + AMP + diphosphate. In terms of biological role, catalyzes the attachment of alanine to tRNA(Ala) in a two-step reaction: alanine is first activated by ATP to form Ala-AMP and then transferred to the acceptor end of tRNA(Ala). Also edits incorrectly charged Ser-tRNA(Ala) and Gly-tRNA(Ala) via its editing domain. In Campylobacter hominis (strain ATCC BAA-381 / DSM 21671 / CCUG 45161 / LMG 19568 / NCTC 13146 / CH001A), this protein is Alanine--tRNA ligase.